We begin with the raw amino-acid sequence, 636 residues long: p-hydroxybenzoate-m-hydroxylase A (636 aa).

FAD is bound by residues 10–39 (DIVI…HIDN), 241–243 (RLY), Tyr-289, and Asp-310. A helical membrane pass occupies residues 11–28 (IVIVGAGPVGIVLSLCMS).

This sequence belongs to the PheA/TfdB FAD monooxygenase family. FAD is required as a cofactor.

It localises to the membrane. The catalysed reaction is 4-hydroxybenzoate + NADH + O2 + H(+) = 3,4-dihydroxybenzoate + NAD(+) + H2O. It carries out the reaction 4-hydroxybenzoate + NADPH + O2 + H(+) = 3,4-dihydroxybenzoate + NADP(+) + H2O. Its function is as follows. FAD-dependent monooxygenase; part of the benzoic acid degradation pathway also known as the protocatechuic acid pathway. Benzoic acid debradation begins with the conversion of benzoic acid into 4-hydroxybenzoic acid through hydroxylation by the benzoate-4-monooxygenase bphA, and its partner NADPH-cytochrome P450 reductase cprA which act as a mediator in electron donation from NADPH. 4-Hydroxybenzoic acid is then converted into 3,4-dihydroxybenzoic acid (also called protocatechuic acid) by the p-hydroxybenzoate-m-hydroxylase phhA. Protocatechuic acid is converted into 3-carboxy-cis,cis-muconic acid by the intradiol ring-cleavage dioxygenase prcA, which is further metabolized through the 3-oxoadipate pathway to finally enter the tricarboxylic acid cycle (TCA). The chain is p-hydroxybenzoate-m-hydroxylase A from Aspergillus niger (strain ATCC MYA-4892 / CBS 513.88 / FGSC A1513).